Reading from the N-terminus, the 26-residue chain is Dermaseptin-J3 (26 aa).

Val26 carries the post-translational modification Valine amide.

As to expression, expressed by the skin glands.

The protein localises to the secreted. Has antimicrobial activity. This Phasmahyla jandaia (Jandaia leaf frog) protein is Dermaseptin-J3.